The primary structure comprises 494 residues: UPF0371 protein SP_0341 (494 aa).

The protein belongs to the UPF0371 family.

This is UPF0371 protein SP_0341 from Streptococcus pneumoniae serotype 4 (strain ATCC BAA-334 / TIGR4).